The primary structure comprises 343 residues: Glucokinase (343 aa).

Residue 21–26 (ADVGGT) participates in ATP binding.

It belongs to the bacterial glucokinase family.

It localises to the cytoplasm. The enzyme catalyses D-glucose + ATP = D-glucose 6-phosphate + ADP + H(+). This chain is Glucokinase, found in Cupriavidus pinatubonensis (strain JMP 134 / LMG 1197) (Cupriavidus necator (strain JMP 134)).